The following is a 452-amino-acid chain: Exodeoxyribonuclease 7 large subunit (452 aa).

This sequence belongs to the XseA family. In terms of assembly, heterooligomer composed of large and small subunits.

It is found in the cytoplasm. It carries out the reaction Exonucleolytic cleavage in either 5'- to 3'- or 3'- to 5'-direction to yield nucleoside 5'-phosphates.. Bidirectionally degrades single-stranded DNA into large acid-insoluble oligonucleotides, which are then degraded further into small acid-soluble oligonucleotides. The polypeptide is Exodeoxyribonuclease 7 large subunit (Bacillus cereus (strain 03BB102)).